The chain runs to 524 residues: Nuclear distribution protein PAC1 (524 aa).

Residues 65–90 adopt a coiled-coil conformation; it reads STVLRLQRKIIDLENEVGTLRSIVDG. 8 WD repeats span residues 121-160, 166-217, 220-262, 277-317, 353-394, 415-454, 463-492, and 493-524; these read QQNQ…TSIP, AHTR…HIRT, GHDH…KSFT, NSQL…GLAL, IPQE…LIPH, GHQS…VTGS, GHDG…DATE, and EESH…KLWS.

The protein belongs to the WD repeat LIS1/nudF family. In terms of assembly, self-associates. Interacts with NDL1 and dynein.

The protein localises to the cytoplasm. The protein resides in the cytoskeleton. Its subcellular location is the spindle pole. In terms of biological role, positively regulates the activity of the minus-end directed microtubule motor protein dynein. Plays a central role in positioning the mitotic spindle at the bud neck during cell division. Targets cytoplasmic dynein to microtubule plus ends, thereby promoting dynein-mediated microtubule sliding along the bud cortex and consequently the movement of the mitotic spindle to the bud neck. This chain is Nuclear distribution protein PAC1, found in Scheffersomyces stipitis (strain ATCC 58785 / CBS 6054 / NBRC 10063 / NRRL Y-11545) (Yeast).